Here is a 418-residue protein sequence, read N- to C-terminus: Lactate dehydrogenase (NAD(+),ferredoxin) subunit LctC (418 aa).

Residues Arg285, 325–328 (IGLS), 343–348 (SGAVQF), Asn362, and 380–381 (DL) contribute to the FAD site.

Belongs to the ETF alpha-subunit/FixB family. Part of the stable heterotrimeric lactate dehydrogenase-Etf complex, which is formed by the lactate dehydrogenase LctD and the electron-transferring flavoprotein (Etf) alpha (LctC) and beta (LctB) subunits. The cofactor is FAD. Requires [4Fe-4S] cluster as cofactor.

The protein localises to the cytoplasm. It catalyses the reaction lactate + 2 reduced [2Fe-2S]-[ferredoxin] + 2 NAD(+) = 2 oxidized [2Fe-2S]-[ferredoxin] + pyruvate + 2 NADH. Its activity is regulated as follows. Activity is stimulated by divalent cations. Highest stimulation is observed with Ca(2+). In terms of biological role, the lactate dehydrogenase-Etf complex catalyzes the oxidation of lactate to pyruvate. It uses flavin-based electron confurcation to drive endergonic lactate oxidation with NAD(+) as oxidant at the expense of simultaneous exergonic electron flow from reduced ferredoxin to NAD(+). The electron transfer flavoprotein (Etf) mediates the electron transfer between the different donors and acceptors. The protein is Lactate dehydrogenase (NAD(+),ferredoxin) subunit LctC of Acetobacterium woodii (strain ATCC 29683 / DSM 1030 / JCM 2381 / KCTC 1655 / WB1).